Reading from the N-terminus, the 66-residue chain is UPF0337 protein SpyM3_1723 (66 aa).

Over residues 1 to 10 the composition is skewed to basic and acidic residues; that stretch reads MSEEKLKSKI. The tract at residues 1-23 is disordered; the sequence is MSEEKLKSKIEQASGGLKEGAGK.

This sequence belongs to the UPF0337 (CsbD) family.

The protein is UPF0337 protein SpyM3_1723 of Streptococcus pyogenes serotype M3 (strain ATCC BAA-595 / MGAS315).